The chain runs to 143 residues: Small ribosomal subunit protein uS11c (143 aa).

The protein belongs to the universal ribosomal protein uS11 family. Part of the 30S ribosomal subunit.

It is found in the plastid. It localises to the chloroplast. This chain is Small ribosomal subunit protein uS11c, found in Hordeum vulgare (Barley).